The primary structure comprises 451 residues: Phosphoglucosamine mutase (451 aa).

Catalysis depends on S102, which acts as the Phosphoserine intermediate. 4 residues coordinate Mg(2+): S102, D242, D244, and D246. S102 is subject to Phosphoserine.

The protein belongs to the phosphohexose mutase family. Requires Mg(2+) as cofactor. In terms of processing, activated by phosphorylation.

The catalysed reaction is alpha-D-glucosamine 1-phosphate = D-glucosamine 6-phosphate. Its function is as follows. Catalyzes the conversion of glucosamine-6-phosphate to glucosamine-1-phosphate. This Staphylococcus carnosus (strain TM300) protein is Phosphoglucosamine mutase.